Reading from the N-terminus, the 201-residue chain is MIPAIEEVVEHLSRLPGIGVKLATRLAYHLLKRDPAEAQVLARGIACLHERVYRCVCCGAFCEGRTCALCTDASRDRGIICVVERAQDVEMMAGVGEYRGLFHVLGGVIAPLEGVGPDQLRIAALLKRLQESSVREVILALNPTVEGDTTALYVQKILANFPVIVTRLASGIPVGGDLEYIDRTTLAHSLRGRRPLDCSEA.

Residues 55–70 (CVCCGAFCEGRTCALC) form a C4-type zinc finger. The Toprim domain occupies 78–173 (GIICVVERAQ…IVTRLASGIP (96 aa)).

This sequence belongs to the RecR family.

In terms of biological role, may play a role in DNA repair. It seems to be involved in an RecBC-independent recombinational process of DNA repair. It may act with RecF and RecO. The protein is Recombination protein RecR of Treponema pallidum (strain Nichols).